Reading from the N-terminus, the 253-residue chain is 5-oxoprolinase subunit A (253 aa).

Belongs to the LamB/PxpA family. In terms of assembly, forms a complex composed of PxpA, PxpB and PxpC.

The enzyme catalyses 5-oxo-L-proline + ATP + 2 H2O = L-glutamate + ADP + phosphate + H(+). Catalyzes the cleavage of 5-oxoproline to form L-glutamate coupled to the hydrolysis of ATP to ADP and inorganic phosphate. The polypeptide is 5-oxoprolinase subunit A (Bacillus cereus (strain 03BB102)).